The primary structure comprises 138 residues: MIQQTLCLIKPDATQRNLIGKILSHLEEAGLTIKALKKVQLNQEQAEGFYAEHQGKEFFAPLVEFMISAPIVAVVLEGENAIAHYRELMGATNPEQRKAGTIRALYAISGRENSVHGSDSEQSAKREIAYFFTPNEIL.

Residues lysine 10, phenylalanine 58, arginine 86, threonine 92, arginine 103, and asparagine 113 each contribute to the ATP site. Histidine 116 serves as the catalytic Pros-phosphohistidine intermediate.

It belongs to the NDK family. As to quaternary structure, homotetramer. The cofactor is Mg(2+).

The protein resides in the cytoplasm. It catalyses the reaction a 2'-deoxyribonucleoside 5'-diphosphate + ATP = a 2'-deoxyribonucleoside 5'-triphosphate + ADP. The catalysed reaction is a ribonucleoside 5'-diphosphate + ATP = a ribonucleoside 5'-triphosphate + ADP. Its function is as follows. Major role in the synthesis of nucleoside triphosphates other than ATP. The ATP gamma phosphate is transferred to the NDP beta phosphate via a ping-pong mechanism, using a phosphorylated active-site intermediate. The chain is Nucleoside diphosphate kinase from Actinobacillus pleuropneumoniae serotype 5b (strain L20).